A 494-amino-acid chain; its full sequence is Glycosyl hydrolase family 109 protein (494 aa).

The tract at residues 1 to 32 (MNDDARPAPEPQDIPPHSGAADEVNRQDPSRR) is disordered. The tat-type signal signal peptide spans 1–58 (MNDDARPAPEPQDIPPHSGAADEVNRQDPSRRSVLWTTAGVAGAGLGLGALGAGTASA). NAD(+) is bound by residues 104-105 (NR), D126, 175-178 (WELH), 195-196 (EC), and N224. Substrate-binding positions include Y253, R272, 284–287 (YPNH), and Y366. Y284 is a binding site for NAD(+).

It belongs to the Gfo/Idh/MocA family. Glycosyl hydrolase 109 subfamily. Requires NAD(+) as cofactor. Predicted to be exported by the Tat system. The position of the signal peptide cleavage has not been experimentally proven.

Glycosidase. The protein is Glycosyl hydrolase family 109 protein of Streptomyces filamentosus (Streptomyces roseosporus).